A 1663-amino-acid chain; its full sequence is Centrosomal protein of 152 kDa (1663 aa).

Residues 1 to 60 are disordered; the sequence is MSIDFDSGALQTQQEDEEYDKEDYAREQELQQLLTDLPHDMLDDSLSSSPEPSYSDCSGH. The span at 44–57 shows a compositional bias: low complexity; that stretch reads DSLSSSPEPSYSDC. 7 coiled-coil regions span residues 266 to 516, 571 to 664, 696 to 796, 843 to 886, 946 to 977, 1014 to 1047, and 1182 to 1288; these read LQVL…ARLG, ELER…KHLL, QDKK…VTAK, SDCI…VEVA, DFTVRQKEFEEKIASMKRELELKAEESQALLK, RNKLTDTLSTAKVEFEKQKNELIAQKDREMAERL, and VQQL…KNDM. Disordered regions lie at residues 1383–1408 and 1595–1628; these read ETTQDQRSLQKPAHSHQNNNPLNQNI and KRKDENSGRKYSNKIQEPSATGIHPESKLFSDVG. Positions 1603 to 1613 are enriched in polar residues; it reads RKYSNKIQEPS.

The protein belongs to the CEP152 family.

It localises to the cytoplasm. The protein localises to the cytoskeleton. Its subcellular location is the microtubule organizing center. The protein resides in the centrosome. It is found in the centriole. Necessary for centrosome duplication; the function also seems to involve cep63, cdk5rap2 and wdr62 through a stepwise assembled complex at the centrosome that recruits cdk2 required for centriole duplication. Acts as a molecular scaffold facilitating the interaction of plk4 and cpap, 2 molecules involved in centriole formation. Also plays a key role in deuterosome-mediated centriole amplification in multiciliated that can generate more than 100 centrioles. Overexpression of cep152 can drive amplification of centrioles. The sequence is that of Centrosomal protein of 152 kDa (cep152) from Xenopus laevis (African clawed frog).